A 183-amino-acid chain; its full sequence is Transmembrane protein 52B (183 aa).

A signal peptide spans 1–24; the sequence is MGVRVHVVAASALLYFILLSGTRC. A helical membrane pass occupies residues 40–60; the sequence is VHLWYIWLLVVIGALLLLCGL. Residues 158 to 183 are disordered; the sequence is DLPPVPEEKQLPPTEKESTRIVDSWN. Basic and acidic residues predominate over residues 163 to 177; that stretch reads PEEKQLPPTEKESTR.

The protein resides in the membrane. The protein is Transmembrane protein 52B (TMEM52B) of Homo sapiens (Human).